Reading from the N-terminus, the 63-residue chain is Hirudin (63 aa).

Positions 1–3 (VVY) are interaction with thrombin active site. 3 disulfides stabilise this stretch: cysteine 6/cysteine 14, cysteine 16/cysteine 28, and cysteine 22/cysteine 39. Residues 39 to 63 (CVTGEGTPGPQSHNDGDFEEPEEYL) are disordered. Threonine 45 is a glycosylation site (O-linked (GalNAc...) threonine). The interaction with fibrinogen-binding exosite of thrombin stretch occupies residues 55-63 (DFEEPEEYL). At tyrosine 62 the chain carries Sulfotyrosine.

The protein belongs to the protease inhibitor I14 (hirudin) family.

It is found in the secreted. Its function is as follows. Hirudin is a potent thrombin-specific protease inhibitor. It forms a stable non-covalent complex with alpha-thrombin, thereby abolishing its ability to cleave fibrinogen. The polypeptide is Hirudin (Poecilobdella viridis (Indian freshwater leech)).